A 682-amino-acid chain; its full sequence is Potassium-transporting ATPase ATP-binding subunit (682 aa).

5 consecutive transmembrane segments (helical) span residues 15 to 35, 42 to 62, 66 to 86, 233 to 253, and 257 to 277; these read AALFDAAVLVAAMRAAFAKLA, SPVMAVVMGGTVLAAVITASG, AGFGWAVTAILFVTVLFGNFA, LTFLIVVASLPAIAGFVGVTL, and LLIALLVCLIPTTIGGLLPAI. The 4-aspartylphosphate intermediate role is filled by D310. Residues D347, E351, 377–384, and K395 each bind ATP; that span reads FTAQTRMS. 2 residues coordinate Mg(2+): D518 and D522. 3 helical membrane passes run 588-608, 616-636, and 662-682; these read FAILPALFAAAIPSMAALNVM, AVLAALIFNALIIPALIPLAL, and VLLPFAAIKAIDLALVAVLGA.

This sequence belongs to the cation transport ATPase (P-type) (TC 3.A.3) family. Type IA subfamily. As to quaternary structure, the system is composed of three essential subunits: KdpA, KdpB and KdpC.

The protein localises to the cell inner membrane. It catalyses the reaction K(+)(out) + ATP + H2O = K(+)(in) + ADP + phosphate + H(+). In terms of biological role, part of the high-affinity ATP-driven potassium transport (or Kdp) system, which catalyzes the hydrolysis of ATP coupled with the electrogenic transport of potassium into the cytoplasm. This subunit is responsible for energy coupling to the transport system and for the release of the potassium ions to the cytoplasm. This chain is Potassium-transporting ATPase ATP-binding subunit, found in Xanthomonas axonopodis pv. citri (strain 306).